A 205-amino-acid polypeptide reads, in one-letter code: Large ribosomal subunit protein uL4 (205 aa).

The protein belongs to the universal ribosomal protein uL4 family. Part of the 50S ribosomal subunit. Contacts proteins L15 and L34.

In terms of biological role, one of the primary rRNA binding proteins, this protein initially binds near the 5'-end of the 23S rRNA. It is important during the early stages of 50S assembly. Functionally, makes multiple contacts with different domains of the 23S rRNA in the assembled 50S subunit. This protein is located close to the polypeptide exit tunnel, and interacts with the modified macrolide azithromycin, which blocks the tunnel. The polypeptide is Large ribosomal subunit protein uL4 (rplD) (Deinococcus radiodurans (strain ATCC 13939 / DSM 20539 / JCM 16871 / CCUG 27074 / LMG 4051 / NBRC 15346 / NCIMB 9279 / VKM B-1422 / R1)).